A 586-amino-acid polypeptide reads, in one-letter code: Phosphoenolpyruvate-protein phosphotransferase (586 aa).

H201 acts as the Tele-phosphohistidine intermediate in catalysis. Residues R308 and R345 each coordinate phosphoenolpyruvate. 2 residues coordinate Mg(2+): E446 and D470. Phosphoenolpyruvate contacts are provided by residues 469–470 and R480; that span reads ND. The Proton donor role is filled by C517.

It belongs to the PEP-utilizing enzyme family. Homodimer. Mg(2+) serves as cofactor.

The protein resides in the cytoplasm. It carries out the reaction L-histidyl-[protein] + phosphoenolpyruvate = N(pros)-phospho-L-histidyl-[protein] + pyruvate. General (non sugar-specific) component of the phosphoenolpyruvate-dependent sugar phosphotransferase system (sugar PTS). This major carbohydrate active-transport system catalyzes the phosphorylation of incoming sugar substrates concomitantly with their translocation across the cell membrane. Enzyme I transfers the phosphoryl group from phosphoenolpyruvate (PEP) to the phosphoryl carrier protein (HPr). The polypeptide is Phosphoenolpyruvate-protein phosphotransferase (Cupriavidus necator (strain ATCC 17699 / DSM 428 / KCTC 22496 / NCIMB 10442 / H16 / Stanier 337) (Ralstonia eutropha)).